The primary structure comprises 179 residues: Peptidyl-prolyl cis-trans isomerase A (179 aa).

The 164-residue stretch at 15-178 folds into the PPIase cyclophilin-type domain; it reads FFDITIGGVE…KPVVIANCGQ (164 aa).

The protein belongs to the cyclophilin-type PPIase family.

It localises to the cytoplasm. The protein localises to the cytosol. It catalyses the reaction [protein]-peptidylproline (omega=180) = [protein]-peptidylproline (omega=0). With respect to regulation, binds cyclosporin A (CsA). CsA mediates some of its effects via an inhibitory action on PPIase. PPIase that catalyzes the cis-trans isomerization of proline imidic peptide bonds in oligopeptides and may therefore assist protein folding. This chain is Peptidyl-prolyl cis-trans isomerase A (ppiA), found in Dictyostelium discoideum (Social amoeba).